The following is an 89-amino-acid chain: Small ribosomal subunit protein uS15 (89 aa).

This sequence belongs to the universal ribosomal protein uS15 family. As to quaternary structure, part of the 30S ribosomal subunit. Forms a bridge to the 50S subunit in the 70S ribosome, contacting the 23S rRNA.

Its function is as follows. One of the primary rRNA binding proteins, it binds directly to 16S rRNA where it helps nucleate assembly of the platform of the 30S subunit by binding and bridging several RNA helices of the 16S rRNA. Forms an intersubunit bridge (bridge B4) with the 23S rRNA of the 50S subunit in the ribosome. The chain is Small ribosomal subunit protein uS15 from Listeria innocua serovar 6a (strain ATCC BAA-680 / CLIP 11262).